The following is a 339-amino-acid chain: Ketol-acid reductoisomerase (NADP(+)) (339 aa).

The 182-residue stretch at 1-182 folds into the KARI N-terminal Rossmann domain; that stretch reads MRVYYDRDAD…GGGRAGIIET (182 aa). NADP(+)-binding positions include 24–27, arginine 48, serine 51, threonine 53, and 83–86; these read YGSQ and DELQ. Histidine 108 is an active-site residue. Residue glycine 134 participates in NADP(+) binding. Residues 183–328 form the KARI C-terminal knotted domain; it reads TFREECETDL…AKLREMMPWI (146 aa). Mg(2+)-binding residues include aspartate 191, glutamate 195, glutamate 227, and glutamate 231. A substrate-binding site is contributed by serine 252.

It belongs to the ketol-acid reductoisomerase family. It depends on Mg(2+) as a cofactor.

The catalysed reaction is (2R)-2,3-dihydroxy-3-methylbutanoate + NADP(+) = (2S)-2-acetolactate + NADPH + H(+). It carries out the reaction (2R,3R)-2,3-dihydroxy-3-methylpentanoate + NADP(+) = (S)-2-ethyl-2-hydroxy-3-oxobutanoate + NADPH + H(+). It participates in amino-acid biosynthesis; L-isoleucine biosynthesis; L-isoleucine from 2-oxobutanoate: step 2/4. Its pathway is amino-acid biosynthesis; L-valine biosynthesis; L-valine from pyruvate: step 2/4. In terms of biological role, involved in the biosynthesis of branched-chain amino acids (BCAA). Catalyzes an alkyl-migration followed by a ketol-acid reduction of (S)-2-acetolactate (S2AL) to yield (R)-2,3-dihydroxy-isovalerate. In the isomerase reaction, S2AL is rearranged via a Mg-dependent methyl migration to produce 3-hydroxy-3-methyl-2-ketobutyrate (HMKB). In the reductase reaction, this 2-ketoacid undergoes a metal-dependent reduction by NADPH to yield (R)-2,3-dihydroxy-isovalerate. The protein is Ketol-acid reductoisomerase (NADP(+)) of Rhodopseudomonas palustris (strain BisA53).